The primary structure comprises 167 residues: UPF0114 protein in repA1-repA2 intergenic region (167 aa).

Helical transmembrane passes span leucine 15–phenylalanine 35, leucine 53–valine 73, and isoleucine 136–isoleucine 156.

It belongs to the UPF0114 family.

It is found in the cell membrane. In Buchnera aphidicola subsp. Schizaphis graminum (strain Sg), this protein is UPF0114 protein in repA1-repA2 intergenic region.